The sequence spans 335 residues: DNA-directed RNA polymerase subunit alpha (335 aa).

The tract at residues 1–233 (MTRTANEFLT…QQIAIFVDLQ (233 aa)) is alpha N-terminal domain (alpha-NTD). The alpha C-terminal domain (alpha-CTD) stretch occupies residues 247–335 (VDPILLRPVD…MDDRFAYRSR (89 aa)).

Belongs to the RNA polymerase alpha chain family. In terms of assembly, homodimer. The RNAP catalytic core consists of 2 alpha, 1 beta, 1 beta' and 1 omega subunit. When a sigma factor is associated with the core the holoenzyme is formed, which can initiate transcription.

It carries out the reaction RNA(n) + a ribonucleoside 5'-triphosphate = RNA(n+1) + diphosphate. Its function is as follows. DNA-dependent RNA polymerase catalyzes the transcription of DNA into RNA using the four ribonucleoside triphosphates as substrates. The sequence is that of DNA-directed RNA polymerase subunit alpha from Acinetobacter baylyi (strain ATCC 33305 / BD413 / ADP1).